The chain runs to 280 residues: Phosphonates import ATP-binding protein PhnC 1 (280 aa).

The 245-residue stretch at 2 to 246 folds into the ABC transporter domain; sequence LRIENLDKRY…VLTRIYGEED (245 aa). Residue 35–42 coordinates ATP; the sequence is GPSGAGKS. The tract at residues 247-266 is disordered; the sequence is WSKTSDEDADSVDAPPRAAD.

The protein belongs to the ABC transporter superfamily. Phosphonates importer (TC 3.A.1.9.1) family. In terms of assembly, the complex is composed of two ATP-binding proteins (PhnC), two transmembrane proteins (PhnE) and a solute-binding protein (PhnD).

The protein localises to the cell inner membrane. It carries out the reaction phosphonate(out) + ATP + H2O = phosphonate(in) + ADP + phosphate + H(+). In terms of biological role, part of the ABC transporter complex PhnCDE involved in phosphonates import. Responsible for energy coupling to the transport system. This is Phosphonates import ATP-binding protein PhnC 1 from Rhodopseudomonas palustris (strain HaA2).